The primary structure comprises 488 residues: Erythromycin resistance ATP-binding protein MsrA (488 aa).

Positions 6–199 (IKFNQINHKL…NQYEQEQLEQ (194 aa)) constitute an ABC transporter 1 domain. Position 38-45 (38-45 (GGNGTGKT)) interacts with ATP. Positions 200-298 (QRKYEQYISE…KIYDIHNNYP (99 aa)) are Q-linker, rich in Glu and hydrophilic AA. The tract at residues 211–255 (QRLSQASKAKRNQAQQMAQASSKQKNKSIAPDRLSASKEKGTVEK) is disordered. The segment covering 222-233 (NQAQQMAQASSK) has biased composition (low complexity). Basic and acidic residues predominate over residues 245 to 255 (SASKEKGTVEK). The ABC transporter 2 domain maps to 299-487 (IIAQNLTLVK…ELTGQSIHDI (189 aa)). 331 to 338 (GANGVGKT) is an ATP binding site.

Belongs to the ABC transporter superfamily.

Confers resistance to 14-membered ring macrolides (like erythromycin) and to B streptogramins, by acting as an ATP-dependent efflux pump. This chain is Erythromycin resistance ATP-binding protein MsrA (msrA), found in Staphylococcus epidermidis.